Consider the following 360-residue polypeptide: 3-dehydroquinate synthase (360 aa).

NAD(+) is bound by residues 106 to 110 (GVIGD), 130 to 131 (TS), K143, and K152. Residues E185, H246, and H262 each coordinate Zn(2+).

This sequence belongs to the sugar phosphate cyclases superfamily. Dehydroquinate synthase family. Requires Co(2+) as cofactor. Zn(2+) is required as a cofactor. The cofactor is NAD(+).

It localises to the cytoplasm. It catalyses the reaction 7-phospho-2-dehydro-3-deoxy-D-arabino-heptonate = 3-dehydroquinate + phosphate. It functions in the pathway metabolic intermediate biosynthesis; chorismate biosynthesis; chorismate from D-erythrose 4-phosphate and phosphoenolpyruvate: step 2/7. Catalyzes the conversion of 3-deoxy-D-arabino-heptulosonate 7-phosphate (DAHP) to dehydroquinate (DHQ). This Leuconostoc citreum (strain KM20) protein is 3-dehydroquinate synthase.